The sequence spans 270 residues: Protein-ADP-ribose hydrolase (270 aa).

Residues 73 to 267 enclose the Macro domain; it reads VSVKDCQKTN…LYDTYLQKEN (195 aa). ADP-D-ribose is bound by residues Asp92, Ile93, and Asn106. Cys112, His117, and Cys119 together coordinate Zn(2+). Positions 119, 120, 121, 212, 213, 214, 215, and 216 each coordinate ADP-D-ribose.

This sequence belongs to the MacroD-type family. Zn-Macro subfamily. The cofactor is Zn(2+).

The catalysed reaction is 4-O-(ADP-D-ribosyl)-L-aspartyl-[protein] + H2O = L-aspartyl-[protein] + ADP-D-ribose + H(+). Functionally, ADP-ribosylhydrolase that specifically reverses the SirTM-mediated mono-ADP-ribosylation at an asparatate residue of GcvH-L, by releasing ADP-ribose from the target protein. May play a role in the regulation of the response to host-induced oxidative stress. This chain is Protein-ADP-ribose hydrolase, found in Streptococcus pyogenes serotype M3 (strain ATCC BAA-595 / MGAS315).